Reading from the N-terminus, the 388-residue chain is Staphopain A (388 aa).

Residues 1-25 (MKRNFPKLIALSLIFSLSVTPIANA) form the signal peptide. Positions 26 to 214 (ESNSNIKAKD…TSQFKSNNYT (189 aa)) are excised as a propeptide. Residues Cys-238, His-334, and Asn-355 contribute to the active site.

It belongs to the peptidase C47 family. As to quaternary structure, in the cytoplasm, prematurely activated/folded ScpA forms a stable non-covalent complex with ScpB. Cleavage leads to the activation of ScpA probably by an auto-catalytic manner.

It localises to the secreted. It carries out the reaction Broad endopeptidase action on proteins including elastin, but rather limited hydrolysis of small-molecule substrates. Assays are conveniently made with hemoglobin, casein or Z-Phe-Arg-NHMec as substrate.. Its activity is regulated as follows. Prematurely activated/folded staphopain A is inhibited by staphostatin A (ScpB), which is probably required to protect staphylococcal cytoplasmic proteins from degradation by ScpA. Cysteine protease that plays an important role in the inhibition of host innate immune response. Cleaves host elastins found in connective tissues, pulmonary surfactant protein A in the lungs, and the chemokine receptor CXCR2 on leukocytes. Proteolytic cleavage of surfactant protein A impairs bacterial phagocytosis by neutrophils while CXCR2 degradation blocks neutrophil activation and chemotaxis. Additionally, promotes vascular leakage by activating the plasma kallikerin/kinin system, resulting in hypotension. In Staphylococcus aureus (strain Mu50 / ATCC 700699), this protein is Staphopain A (sspP).